Reading from the N-terminus, the 229-residue chain is UPF0173 metal-dependent hydrolase SAR1785 (229 aa).

This sequence belongs to the UPF0173 family.

In Staphylococcus aureus (strain MRSA252), this protein is UPF0173 metal-dependent hydrolase SAR1785.